We begin with the raw amino-acid sequence, 331 residues long: D-alanine--D-alanine ligase (331 aa).

The ATP-grasp domain occupies 122–328 (KLWYDAIGIP…FHEFLADCIE (207 aa)). Residue 152-207 (AFDKWGKLFVKAARQGSSVGCYSVTNIEQLSDAIDKAFGFSHQVLVEKAVKPRELE) participates in ATP binding. 3 residues coordinate Mg(2+): Asp282, Glu295, and Asn297.

The protein belongs to the D-alanine--D-alanine ligase family. Mg(2+) serves as cofactor. Mn(2+) is required as a cofactor.

The protein localises to the cytoplasm. It catalyses the reaction 2 D-alanine + ATP = D-alanyl-D-alanine + ADP + phosphate + H(+). Its pathway is cell wall biogenesis; peptidoglycan biosynthesis. Cell wall formation. This is D-alanine--D-alanine ligase from Vibrio vulnificus (strain YJ016).